The sequence spans 469 residues: UDP-N-acetylmuramate--L-alanine ligase (469 aa).

113–119 serves as a coordination point for ATP; sequence GAHGKTT.

This sequence belongs to the MurCDEF family.

It is found in the cytoplasm. The catalysed reaction is UDP-N-acetyl-alpha-D-muramate + L-alanine + ATP = UDP-N-acetyl-alpha-D-muramoyl-L-alanine + ADP + phosphate + H(+). It participates in cell wall biogenesis; peptidoglycan biosynthesis. In terms of biological role, cell wall formation. This Syntrophobacter fumaroxidans (strain DSM 10017 / MPOB) protein is UDP-N-acetylmuramate--L-alanine ligase.